Consider the following 318-residue polypeptide: Porphobilinogen deaminase (318 aa).

Cys-241 is subject to S-(dipyrrolylmethanemethyl)cysteine.

Belongs to the HMBS family. Monomer. Dipyrromethane serves as cofactor.

The catalysed reaction is 4 porphobilinogen + H2O = hydroxymethylbilane + 4 NH4(+). The protein operates within porphyrin-containing compound metabolism; protoporphyrin-IX biosynthesis; coproporphyrinogen-III from 5-aminolevulinate: step 2/4. Its function is as follows. Tetrapolymerization of the monopyrrole PBG into the hydroxymethylbilane pre-uroporphyrinogen in several discrete steps. This Geotalea uraniireducens (strain Rf4) (Geobacter uraniireducens) protein is Porphobilinogen deaminase.